Reading from the N-terminus, the 177-residue chain is Putative HTH-type transcriptional regulator YvaV (177 aa).

Residues 49–73 (LTELSEATGMSKTRMSQVVREMLDA) constitute a DNA-binding region (H-T-H motif).

It belongs to the GbsR family.

This chain is Putative HTH-type transcriptional regulator YvaV (yvaV), found in Bacillus subtilis (strain 168).